A 249-amino-acid polypeptide reads, in one-letter code: MVNKSQVLLDIANKKAIKVISGLTNLNYEHVLTIARASQRACVSYIDIAADPQLVKVVKANVNIPICVSGLEIQPIYNAVLAGADLIEVGNYESLYKRNTVLSVCKIITLVEEIKKLCPRVPLTVTIPYILNQKDQINLCKQLESLRVDYIQTEGNSISKCKNHCVQDLLRLSLQTLACTYELVKHTQLPIICSSGLSDVTVPLAFSLGASGIGIGKFVTSYYEEEKIVSILSKIKKIVSGTRSYQACE.

The protein belongs to the ycf23 family.

It localises to the plastid. The protein resides in the chloroplast. This is an uncharacterized protein from Cyanidium caldarium (Red alga).